A 438-amino-acid chain; its full sequence is tRNA(Ile)-lysidine synthase (438 aa).

Ser-27 to Ser-32 is an ATP binding site.

This sequence belongs to the tRNA(Ile)-lysidine synthase family.

It is found in the cytoplasm. It carries out the reaction cytidine(34) in tRNA(Ile2) + L-lysine + ATP = lysidine(34) in tRNA(Ile2) + AMP + diphosphate + H(+). Its function is as follows. Ligates lysine onto the cytidine present at position 34 of the AUA codon-specific tRNA(Ile) that contains the anticodon CAU, in an ATP-dependent manner. Cytidine is converted to lysidine, thus changing the amino acid specificity of the tRNA from methionine to isoleucine. This Vibrio parahaemolyticus serotype O3:K6 (strain RIMD 2210633) protein is tRNA(Ile)-lysidine synthase.